Reading from the N-terminus, the 53-residue chain is Putative defensin-like protein 53 (53 aa).

4 cysteine pairs are disulfide-bonded: Cys-12–Cys-51, Cys-16–Cys-40, Cys-26–Cys-49, and Cys-30–Cys-50.

The protein belongs to the DEFL family.

This is Putative defensin-like protein 53 from Arabidopsis thaliana (Mouse-ear cress).